Consider the following 174-residue polypeptide: NADH-quinone oxidoreductase subunit I (174 aa).

4Fe-4S ferredoxin-type domains lie at 44-74 (LNRY…VEGD) and 90-119 (RVYQ…MTND). Positions 54, 57, 60, 64, 99, 102, 105, and 109 each coordinate [4Fe-4S] cluster.

The protein belongs to the complex I 23 kDa subunit family. In terms of assembly, NDH-1 is composed of 14 different subunits. Subunits NuoA, H, J, K, L, M, N constitute the membrane sector of the complex. [4Fe-4S] cluster is required as a cofactor.

It is found in the cell membrane. The enzyme catalyses a quinone + NADH + 5 H(+)(in) = a quinol + NAD(+) + 4 H(+)(out). Functionally, NDH-1 shuttles electrons from NADH, via FMN and iron-sulfur (Fe-S) centers, to quinones in the respiratory chain. The immediate electron acceptor for the enzyme in this species is believed to be menaquinone. Couples the redox reaction to proton translocation (for every two electrons transferred, four hydrogen ions are translocated across the cytoplasmic membrane), and thus conserves the redox energy in a proton gradient. The sequence is that of NADH-quinone oxidoreductase subunit I from Mycobacterium sp. (strain KMS).